The sequence spans 173 residues: Dual-action ribosomal maturation protein DarP (173 aa).

This sequence belongs to the DarP family.

The protein resides in the cytoplasm. Its function is as follows. Member of a network of 50S ribosomal subunit biogenesis factors which assembles along the 30S-50S interface, preventing incorrect 23S rRNA structures from forming. Promotes peptidyl transferase center (PTC) maturation. In Pseudomonas putida (strain ATCC 700007 / DSM 6899 / JCM 31910 / BCRC 17059 / LMG 24140 / F1), this protein is Dual-action ribosomal maturation protein DarP.